Consider the following 603-residue polypeptide: Phosphoribosylformylglycinamidine synthase subunit PurL (603 aa).

The active site involves His-32. ATP is bound by residues Tyr-35 and Lys-68. Glu-70 contacts Mg(2+). Residues 71–74 and Arg-93 contribute to the substrate site; that span reads SHNH. The active-site Proton acceptor is the His-72. Asp-94 provides a ligand contact to Mg(2+). ATP contacts are provided by residues Asp-107 and 136–139; that span reads GELR. Substrate contacts are provided by Gly-189 and Gln-208. Asp-236 provides a ligand contact to Mg(2+). Substrate is bound at residue 280-282; that stretch reads ESQ. Positions 388, 429, 442, and 477 each coordinate ATP. Asn-478 lines the Mg(2+) pocket. A substrate-binding site is contributed by Ser-480. Ser-549 and His-556 together coordinate ATP.

The protein belongs to the FGAMS family. As to quaternary structure, monomer. Part of the FGAM synthase complex composed of 1 PurL, 1 PurQ and 2 PurS subunits.

It is found in the cytoplasm. It catalyses the reaction N(2)-formyl-N(1)-(5-phospho-beta-D-ribosyl)glycinamide + L-glutamine + ATP + H2O = 2-formamido-N(1)-(5-O-phospho-beta-D-ribosyl)acetamidine + L-glutamate + ADP + phosphate + H(+). It functions in the pathway purine metabolism; IMP biosynthesis via de novo pathway; 5-amino-1-(5-phospho-D-ribosyl)imidazole from N(2)-formyl-N(1)-(5-phospho-D-ribosyl)glycinamide: step 1/2. Its function is as follows. Part of the phosphoribosylformylglycinamidine synthase complex involved in the purines biosynthetic pathway. Catalyzes the ATP-dependent conversion of formylglycinamide ribonucleotide (FGAR) and glutamine to yield formylglycinamidine ribonucleotide (FGAM) and glutamate. The FGAM synthase complex is composed of three subunits. PurQ produces an ammonia molecule by converting glutamine to glutamate. PurL transfers the ammonia molecule to FGAR to form FGAM in an ATP-dependent manner. PurS interacts with PurQ and PurL and is thought to assist in the transfer of the ammonia molecule from PurQ to PurL. This chain is Phosphoribosylformylglycinamidine synthase subunit PurL, found in Thermotoga maritima (strain ATCC 43589 / DSM 3109 / JCM 10099 / NBRC 100826 / MSB8).